We begin with the raw amino-acid sequence, 482 residues long: E1B 55 kDa protein (482 aa).

The interval 73–94 (VLDSGEGPSCADDRDKQEKKES) is disordered. Positions 83 to 94 (ADDRDKQEKKES) are enriched in basic and acidic residues. Phosphoserine is present on residues Ser-476 and Ser-477.

This sequence belongs to the adenoviridae E1B 55 kDa protein family. In terms of assembly, interacts with host PML-4 and PML-5; this interaction promotes efficient subnuclear targeting of E1B-55K to PML nuclear bodies. Interacts with E4-ORF3 protein. Interacts with E4-ORF6 protein.

It localises to the host nucleus. It is found in the host cytoplasm. Plays a major role to prevent cellular inhibition of viral genome replication. Assembles an SCF-like E3 ubiquitin ligase complex based on the cellular proteins ELOB, ELOC, CUL5 and RBX1, in cooperation with viral E4orf6. This viral RING-type ligase ubiquitinates cellular substrates and targets them to proteasomal degradation: TP53/p53, LIG4, MRE11-RAD50-NBS1 (MRN) complex, ITGA3, DAXX and BLM. E1B-55K probably acts as the substrate-specific adapter of the SCF-like E3 ubiquitin ligase complex. Degradation of host TP53/p53 activity is essential for preventing E1A-induced TP53 accumulation that would otherwise lead to cell apoptosis and growth arrest. E1B-55K also inactivates TP53 transcription-factor activity by binding its transactivation domain. E1B-55K also functions as a SUMO1 E3 ligase for TP53 which causes the latter to be sequestered in promyelocytic leukemia (PML) nuclear bodies thereby contributing to maximal inhibition of TP53 function. This Homo sapiens (Human) protein is E1B 55 kDa protein.